The chain runs to 241 residues: Small ribosomal subunit protein uS2 (241 aa).

The protein belongs to the universal ribosomal protein uS2 family.

This chain is Small ribosomal subunit protein uS2, found in Yersinia pestis bv. Antiqua (strain Antiqua).